Here is a 206-residue protein sequence, read N- to C-terminus: uncharacterized protein (206 aa).

The N-terminal stretch at 1-18 (MKTYSLLLGLFISFGVLA) is a signal peptide.

This is an uncharacterized protein from Haemophilus influenzae (strain ATCC 51907 / DSM 11121 / KW20 / Rd).